We begin with the raw amino-acid sequence, 507 residues long: MVTLRVDEISNIIRERIEQYNREVTIVNTGTVLQVGDGIARIHGLDQVMAGELVEFEEGTVGIALNLESNNVGVVLMGDGLMIQEGSSVKATGRIAQIPVSEAYLGRVINALAKPIDGRGEISASESRLIESPAPGIISRRSVYEPLQTGLIAIDSMIPIGRGQRELIIGDRQTGKTAVATDTILNQKGQNVICLYVAIGQKASSVAQVVTTFQERGAMEYTIVVAETADSPATLQYLAPYTGAALAEYFMYRERHTSIIYDDLSKQAQAYRQMSLLLRRPPGREAYPGDVFYLHSRLLERAAKSSSHLGEGSMTALPIVETQSGDVSAYIPTNVISITDGQIFLSSDLFNAGIRPAINVGISVSRVGSAAQIKAMKQVAGKSKLELAQFAELEAFAQFASDLDKATQNQLARGQRLRELLKQSQSAPLTVEEQILTIYTGANGYLDPLDIGQVKKFLVQLRTHLKTNKPQFQEIISSTKTFTEQAEALLKEAIPEQMELFILQEQT.

ATP is bound at residue 170–177; it reads GDRQTGKT.

It belongs to the ATPase alpha/beta chains family. F-type ATPases have 2 components, CF(1) - the catalytic core - and CF(0) - the membrane proton channel. CF(1) has five subunits: alpha(3), beta(3), gamma(1), delta(1), epsilon(1). CF(0) has four main subunits: a, b, b' and c.

It localises to the plastid. The protein localises to the chloroplast thylakoid membrane. It carries out the reaction ATP + H2O + 4 H(+)(in) = ADP + phosphate + 5 H(+)(out). Produces ATP from ADP in the presence of a proton gradient across the membrane. The alpha chain is a regulatory subunit. The chain is ATP synthase subunit alpha, chloroplastic from Drimys granadensis.